The primary structure comprises 144 residues: 3-hydroxyacyl-[acyl-carrier-protein] dehydratase FabZ (144 aa).

The active site involves histidine 48.

This sequence belongs to the thioester dehydratase family. FabZ subfamily.

The protein localises to the cytoplasm. The enzyme catalyses a (3R)-hydroxyacyl-[ACP] = a (2E)-enoyl-[ACP] + H2O. Its function is as follows. Involved in unsaturated fatty acids biosynthesis. Catalyzes the dehydration of short chain beta-hydroxyacyl-ACPs and long chain saturated and unsaturated beta-hydroxyacyl-ACPs. In Chloroflexus aggregans (strain MD-66 / DSM 9485), this protein is 3-hydroxyacyl-[acyl-carrier-protein] dehydratase FabZ.